A 438-amino-acid chain; its full sequence is Coenzyme A disulfide reductase (438 aa).

8–33 provides a ligand contact to FAD; that stretch reads GAVAGGATCASQIRRLDKESDIIIFE. The substrate site is built by T15, Q19, R22, S39, and N42. The active-site Nucleophile is the C43. The active-site Redox-active is C43. K71 is a substrate binding site. 151–166 is a binding site for NADP(+); that stretch reads VLVIGAGYVSLEVLEN. 267 to 277 lines the FAD pocket; it reads TNVPNIYAIGD. Residue H299 participates in substrate binding. Residue Y419 participates in FAD binding. K427 contacts substrate.

The protein belongs to the class-III pyridine nucleotide-disulfide oxidoreductase family. In terms of assembly, homodimer. The cofactor is FAD.

The catalysed reaction is NADP(+) + 2 CoA = CoA-disulfide + NADPH + H(+). Its function is as follows. Catalyzes specifically the NADPH-dependent reduction of coenzyme A disulfide. The protein is Coenzyme A disulfide reductase of Staphylococcus aureus (strain JH1).